Reading from the N-terminus, the 162-residue chain is Crossover junction endodeoxyribonuclease RuvC (162 aa).

Residues aspartate 8, glutamate 69, and histidine 141 contribute to the active site. Mg(2+) contacts are provided by aspartate 8, glutamate 69, and histidine 141.

The protein belongs to the RuvC family. In terms of assembly, homodimer which binds Holliday junction (HJ) DNA. The HJ becomes 2-fold symmetrical on binding to RuvC with unstacked arms; it has a different conformation from HJ DNA in complex with RuvA. In the full resolvosome a probable DNA-RuvA(4)-RuvB(12)-RuvC(2) complex forms which resolves the HJ. Mg(2+) serves as cofactor.

Its subcellular location is the cytoplasm. The catalysed reaction is Endonucleolytic cleavage at a junction such as a reciprocal single-stranded crossover between two homologous DNA duplexes (Holliday junction).. The RuvA-RuvB-RuvC complex processes Holliday junction (HJ) DNA during genetic recombination and DNA repair. Endonuclease that resolves HJ intermediates. Cleaves cruciform DNA by making single-stranded nicks across the HJ at symmetrical positions within the homologous arms, yielding a 5'-phosphate and a 3'-hydroxyl group; requires a central core of homology in the junction. The consensus cleavage sequence is 5'-(A/T)TT(C/G)-3'. Cleavage occurs on the 3'-side of the TT dinucleotide at the point of strand exchange. HJ branch migration catalyzed by RuvA-RuvB allows RuvC to scan DNA until it finds its consensus sequence, where it cleaves and resolves the cruciform DNA. This is Crossover junction endodeoxyribonuclease RuvC from Wolbachia sp. subsp. Brugia malayi (strain TRS).